Reading from the N-terminus, the 262-residue chain is Small ribosomal subunit protein eS1 (262 aa).

The segment covering 235–253 (HGDGKGSDEPGAKVSRPEA) has biased composition (basic and acidic residues). The disordered stretch occupies residues 235 to 262 (HGDGKGSDEPGAKVSRPEAYEPPVQESV).

It belongs to the eukaryotic ribosomal protein eS1 family. As to quaternary structure, component of the small ribosomal subunit. Mature ribosomes consist of a small (40S) and a large (60S) subunit. The 40S subunit contains about 33 different proteins and 1 molecule of RNA (18S). The 60S subunit contains about 49 different proteins and 3 molecules of RNA (28S, 5.8S and 5S).

It is found in the cytoplasm. The polypeptide is Small ribosomal subunit protein eS1 (Triatoma infestans (Assassin bug)).